The sequence spans 124 residues: MPTINQLVRKGRLKLSCKKKVPALGKSNPQRRGVCTKVYTTTPRKPNSALRKVARVRISGYGEVTAYIPGEGHNLQEHSVVLIRGGRVKDLPGVRYHIIRGALDLRGVQNRKKARSKYGVKKSS.

D90 is modified (3-methylthioaspartic acid).

The protein belongs to the universal ribosomal protein uS12 family. As to quaternary structure, part of the 30S ribosomal subunit. Contacts proteins S8 and S17. May interact with IF1 in the 30S initiation complex.

Functionally, with S4 and S5 plays an important role in translational accuracy. Interacts with and stabilizes bases of the 16S rRNA that are involved in tRNA selection in the A site and with the mRNA backbone. Located at the interface of the 30S and 50S subunits, it traverses the body of the 30S subunit contacting proteins on the other side and probably holding the rRNA structure together. The combined cluster of proteins S8, S12 and S17 appears to hold together the shoulder and platform of the 30S subunit. This Wolbachia sp. subsp. Brugia malayi (strain TRS) protein is Small ribosomal subunit protein uS12.